Reading from the N-terminus, the 689-residue chain is Long-chain-fatty-acid--CoA ligase 2 (689 aa).

252–263 (YTSGSTGKPKGV) lines the ATP pocket. The FACS motif lies at 518-567 (DGWFKTGDVGEIAKGNTLRLIDRKKNIVKSLNGEYIALEKIEAQFFTSPL).

It belongs to the ATP-dependent AMP-binding enzyme family. Requires Mg(2+) as cofactor.

Its subcellular location is the golgi apparatus. The protein resides in the vacuole membrane. The enzyme catalyses a long-chain fatty acid + ATP + CoA = a long-chain fatty acyl-CoA + AMP + diphosphate. Its function is as follows. Esterification, concomitant with transport, of endogenous long-chain fatty acids into metabolically active CoA thioesters for subsequent degradation or incorporation into phospholipids. Plays an important role in the determination of viability in the stationary phase. This Schizosaccharomyces pombe (strain 972 / ATCC 24843) (Fission yeast) protein is Long-chain-fatty-acid--CoA ligase 2 (lcf2).